We begin with the raw amino-acid sequence, 1201 residues long: DNA-directed RNA polymerase subunit beta' (1201 aa).

Positions 60, 62, 75, and 78 each coordinate Zn(2+). Mg(2+)-binding residues include D449, D451, and D453. Zn(2+) contacts are provided by C818, C892, C899, and C902.

It belongs to the RNA polymerase beta' chain family. As to quaternary structure, the RNAP catalytic core consists of 2 alpha, 1 beta, 1 beta' and 1 omega subunit. When a sigma factor is associated with the core the holoenzyme is formed, which can initiate transcription. Mg(2+) serves as cofactor. It depends on Zn(2+) as a cofactor.

It carries out the reaction RNA(n) + a ribonucleoside 5'-triphosphate = RNA(n+1) + diphosphate. Its function is as follows. DNA-dependent RNA polymerase catalyzes the transcription of DNA into RNA using the four ribonucleoside triphosphates as substrates. This chain is DNA-directed RNA polymerase subunit beta', found in Listeria welshimeri serovar 6b (strain ATCC 35897 / DSM 20650 / CCUG 15529 / CIP 8149 / NCTC 11857 / SLCC 5334 / V8).